Consider the following 653-residue polypeptide: Biotin biosynthesis bifunctional protein BioWF (653 aa).

Position 278 (Arg278) interacts with substrate. 365-366 provides a ligand contact to pyridoxal 5'-phosphate; sequence GY. Residue His390 participates in substrate binding. Pyridoxal 5'-phosphate is bound by residues Ser436, 461–464, and 492–495; these read DDAH and TASK. Lys495 carries the N6-(pyridoxal phosphate)lysine modification.

In the N-terminal section; belongs to the BioW family. It in the C-terminal section; belongs to the class-II pyridoxal-phosphate-dependent aminotransferase family. BioF subfamily. Homodimer. Requires Mg(2+) as cofactor. Pyridoxal 5'-phosphate serves as cofactor.

The catalysed reaction is heptanedioate + ATP + CoA = 6-carboxyhexanoyl-CoA + AMP + diphosphate. It carries out the reaction 6-carboxyhexanoyl-[ACP] + L-alanine + H(+) = (8S)-8-amino-7-oxononanoate + holo-[ACP] + CO2. The protein operates within metabolic intermediate metabolism; pimeloyl-CoA biosynthesis; pimeloyl-CoA from pimelate: step 1/1. It participates in cofactor biosynthesis; biotin biosynthesis. Catalyzes both the decarboxylative condensation of pimeloyl-[acyl-carrier protein] and L-alanine to produce 8-amino-7-oxononanoate (AON), [acyl-carrier protein], and carbon dioxide, and the transformation of pimelate into pimeloyl-CoA with concomitant hydrolysis of ATP to AMP. This is Biotin biosynthesis bifunctional protein BioWF from Cutibacterium acnes (strain DSM 16379 / KPA171202) (Propionibacterium acnes).